A 294-amino-acid polypeptide reads, in one-letter code: Xyloglucan endotransglucosylase protein 34 (294 aa).

A signal peptide spans 1 to 22 (MAAAYPWTLFLGMLVMVSGTMG). Residues 23–221 (AALRKPVDVA…WSKAPFIASY (199 aa)) enclose the GH16 domain. Glu-107 acts as the Nucleophile in catalysis. Glu-111 serves as the catalytic Proton donor. Xyloglucan is bound at residue Glu-111. Residue Asn-115 is glycosylated (N-linked (GlcNAc...) asparagine). Residues 124-126 (QTN), 134-136 (DRE), 200-201 (DW), and Gly-205 contribute to the xyloglucan site. 2 disulfides stabilise this stretch: Cys-229/Cys-238 and Cys-275/Cys-288. Arg-280 lines the xyloglucan pocket.

It belongs to the glycosyl hydrolase 16 family. XTH group 1 subfamily. In terms of processing, contains at least one intrachain disulfide bond essential for its enzymatic activity. Post-translationally, N-glycosylated. Contains N-acetylglucosamine and mannose. Glycosylation is not essential for its catalytic activity. As to expression, expressed in mature gelatinous (G) cell wall layer of the tension wood fibers. Highly expressed in the outer zone of the G layer close to the secondary S2 layer. Not expressed in the mature walls of the ray cells or vessel elements (at protein level). Highest expression in both the phloem/cambium and differentiating xylem of the mature stem containing primarily secondary cell wall forming cells, in root tips and young roots. Expressed at low levels in apical bud.

It localises to the secreted. The protein localises to the cell wall. Its subcellular location is the extracellular space. It is found in the apoplast. The protein resides in the cytoplasm. The catalysed reaction is breaks a beta-(1-&gt;4) bond in the backbone of a xyloglucan and transfers the xyloglucanyl segment on to O-4 of the non-reducing terminal glucose residue of an acceptor, which can be a xyloglucan or an oligosaccharide of xyloglucan.. Its function is as follows. Catalyzes xyloglucan endotransglycosylation (XET). Cleaves and religates xyloglucan polymers. Does not catalyze xyloglucan endohydrolysis (XEH). Involved in early phases of secondary (S) cell wall formation in fibers of the xylem and phloem vascular tissues of wood stems. May play a role in restructuring primary cell walls, possibly creating and reinforcing the connections between the primary and S cell wall layers. Functions in the gelatinous (G) layers of the tension wood fibers that are involved in bending of the wood stems. May play a role in G fiber shrinking by repairing broken xyloglucan cross-links between G and S2 cell wall layers via its XET activity to maintain connections between the layers. This chain is Xyloglucan endotransglucosylase protein 34, found in Populus tremula x Populus tremuloides (Hybrid aspen).